The chain runs to 260 residues: Indole-3-glycerol phosphate synthase (260 aa).

This sequence belongs to the TrpC family.

It catalyses the reaction 1-(2-carboxyphenylamino)-1-deoxy-D-ribulose 5-phosphate + H(+) = (1S,2R)-1-C-(indol-3-yl)glycerol 3-phosphate + CO2 + H2O. The protein operates within amino-acid biosynthesis; L-tryptophan biosynthesis; L-tryptophan from chorismate: step 4/5. The sequence is that of Indole-3-glycerol phosphate synthase from Staphylococcus saprophyticus subsp. saprophyticus (strain ATCC 15305 / DSM 20229 / NCIMB 8711 / NCTC 7292 / S-41).